A 350-amino-acid polypeptide reads, in one-letter code: NADH-quinone oxidoreductase subunit H (350 aa).

The next 8 membrane-spanning stretches (helical) occupy residues 31–51, 102–122, 132–152, 171–191, 205–225, 263–283, 286–306, and 322–342; these read LMLLAVVGVLAFLFLNALFLI, LLAPVLIFTIPVMLFLVIPFG, LGVLYLVAITSVETIVLWMAG, MLSYEMPVILAMLSVVMMAGS, WFIFLQPVGFLIYFIAVNAEF, FMIGAIMVTTLFLGGWNAPFG, FIPSWLWFIIKMYFVITLYMW, and FAWKFLLPVSLANIFITGFGL.

This sequence belongs to the complex I subunit 1 family. In terms of assembly, NDH-1 is composed of 14 different subunits. Subunits NuoA, H, J, K, L, M, N constitute the membrane sector of the complex.

It localises to the cell membrane. The enzyme catalyses a quinone + NADH + 5 H(+)(in) = a quinol + NAD(+) + 4 H(+)(out). In terms of biological role, NDH-1 shuttles electrons from NADH, via FMN and iron-sulfur (Fe-S) centers, to quinones in the respiratory chain. The immediate electron acceptor for the enzyme in this species is believed to be ubiquinone. Couples the redox reaction to proton translocation (for every two electrons transferred, four hydrogen ions are translocated across the cytoplasmic membrane), and thus conserves the redox energy in a proton gradient. This subunit may bind ubiquinone. The sequence is that of NADH-quinone oxidoreductase subunit H from Carboxydothermus hydrogenoformans (strain ATCC BAA-161 / DSM 6008 / Z-2901).